The chain runs to 504 residues: CaM kinase-like vesicle-associated protein (504 aa).

A Protein kinase domain is found at 24-286; it reads YDLGQVVKTE…AEEAISHEWI (263 aa). The tract at residues 378–504 is disordered; it reads KSDDMASADR…AQESQRVETS (127 aa). The residue at position 384 (serine 384) is a Phosphoserine. A compositionally biased stretch (polar residues) spans 390 to 431; the sequence is TPATDGSATPATDGSVTPATDGSITPATDGSVTPATDRSATP. Residues threonine 438 and threonine 462 each carry the phosphothreonine modification. The segment covering 445 to 470 has biased composition (low complexity); that stretch reads TVPAAQSSAAPAAKAAATPEPAVAQP.

It belongs to the protein kinase superfamily. CAMK Ser/Thr protein kinase family. In terms of assembly, interacts with calmodulin, in the presence of calcium. Requires Ca(2+) as cofactor. Expressed in brain and weakly in eye. Not detected in liver, kidney, spleen, thymus, bladder, aorta, lung, intestine, esophagus, stomach, skeletal muscle, heart, diaphragm, uterus, tail skin, submaxillary gland, prostate, ear, epididymis, placenta, pancreas, ovary, testis, adrenal gland, parathyroid gland, thyroid gland, pineal gland, pituitary and sciatic nerve. In adult hippocampus, predominantly expressed in caudate nucleus, cortex, hypothalamus, olfactory bulb, and midbrain and faintly in pons, brainstem and spinal cord.

It is found in the cell membrane. The protein localises to the cytoplasmic vesicle membrane. Functionally, has no detectable kinase activity in vitro. The chain is CaM kinase-like vesicle-associated protein (Camkv) from Rattus norvegicus (Rat).